The chain runs to 262 residues: Acyl-[acyl-carrier-protein]--UDP-N-acetylglucosamine O-acyltransferase (262 aa).

It belongs to the transferase hexapeptide repeat family. LpxA subfamily. As to quaternary structure, homotrimer.

Its subcellular location is the cytoplasm. It catalyses the reaction a (3R)-hydroxyacyl-[ACP] + UDP-N-acetyl-alpha-D-glucosamine = a UDP-3-O-[(3R)-3-hydroxyacyl]-N-acetyl-alpha-D-glucosamine + holo-[ACP]. It functions in the pathway glycolipid biosynthesis; lipid IV(A) biosynthesis; lipid IV(A) from (3R)-3-hydroxytetradecanoyl-[acyl-carrier-protein] and UDP-N-acetyl-alpha-D-glucosamine: step 1/6. Functionally, involved in the biosynthesis of lipid A, a phosphorylated glycolipid that anchors the lipopolysaccharide to the outer membrane of the cell. The polypeptide is Acyl-[acyl-carrier-protein]--UDP-N-acetylglucosamine O-acyltransferase (Psychromonas ingrahamii (strain DSM 17664 / CCUG 51855 / 37)).